The chain runs to 370 residues: Isopentenyl-diphosphate delta-isomerase (370 aa).

8–9 (RK) contacts substrate. Residues threonine 65, 66–68 (GMT), serine 99, and asparagine 127 contribute to the FMN site. 99-101 (SQR) serves as a coordination point for substrate. Residue glutamine 166 participates in substrate binding. Glutamate 167 is a Mg(2+) binding site. Residues lysine 198, serine 223, threonine 228, 277-279 (GMR), and 298-299 (AL) each bind FMN.

The protein belongs to the IPP isomerase type 2 family. Homooctamer. Dimer of tetramers. The cofactor is FMN. NADPH is required as a cofactor. Requires Mg(2+) as cofactor.

It localises to the cytoplasm. It catalyses the reaction isopentenyl diphosphate = dimethylallyl diphosphate. Functionally, involved in the biosynthesis of isoprenoids. Catalyzes the 1,3-allylic rearrangement of the homoallylic substrate isopentenyl (IPP) to its allylic isomer, dimethylallyl diphosphate (DMAPP). The protein is Isopentenyl-diphosphate delta-isomerase of Pyrococcus abyssi (strain GE5 / Orsay).